Consider the following 128-residue polypeptide: Small ribosomal subunit protein uS14m (128 aa).

This sequence belongs to the universal ribosomal protein uS14 family. As to quaternary structure, component of the mitochondrial ribosome small subunit (28S) which comprises a 12S rRNA and about 30 distinct proteins. Interacts with LIAT1.

The protein localises to the mitochondrion. The polypeptide is Small ribosomal subunit protein uS14m (Mrps14) (Mus musculus (Mouse)).